The primary structure comprises 195 residues: Nucleoid occlusion factor SlmA (195 aa).

Residues 7–67 (TNRRAQILQA…GLIEFIEETL (61 aa)) form the HTH tetR-type domain. Residues 30-49 (TTAKLAEKVGVSEAALYRHF) constitute a DNA-binding region (H-T-H motif). The stretch at 109–141 (DALMGEQDRLRARIAKLFERLETQLKQVLRERK) forms a coiled coil.

This sequence belongs to the nucleoid occlusion factor SlmA family. As to quaternary structure, homodimer. Interacts with FtsZ.

The protein resides in the cytoplasm. It is found in the nucleoid. In terms of biological role, required for nucleoid occlusion (NO) phenomenon, which prevents Z-ring formation and cell division over the nucleoid. Acts as a DNA-associated cell division inhibitor that binds simultaneously chromosomal DNA and FtsZ, and disrupts the assembly of FtsZ polymers. SlmA-DNA-binding sequences (SBS) are dispersed on non-Ter regions of the chromosome, preventing FtsZ polymerization at these regions. This is Nucleoid occlusion factor SlmA from Alteromonas mediterranea (strain DSM 17117 / CIP 110805 / LMG 28347 / Deep ecotype).